An 80-amino-acid polypeptide reads, in one-letter code: Acyl carrier protein (80 aa).

Residues 2 to 77 (SEINQKVVDI…QVVEYLEKRL (76 aa)) enclose the Carrier domain. Ser-37 carries the O-(pantetheine 4'-phosphoryl)serine modification.

This sequence belongs to the acyl carrier protein (ACP) family. In terms of processing, 4'-phosphopantetheine is transferred from CoA to a specific serine of apo-ACP by AcpS. This modification is essential for activity because fatty acids are bound in thioester linkage to the sulfhydryl of the prosthetic group.

Its subcellular location is the cytoplasm. It functions in the pathway lipid metabolism; fatty acid biosynthesis. Carrier of the growing fatty acid chain in fatty acid biosynthesis. This Amoebophilus asiaticus (strain 5a2) protein is Acyl carrier protein.